The chain runs to 308 residues: Ribosomal RNA small subunit methyltransferase H (308 aa).

S-adenosyl-L-methionine-binding positions include 34–36 (GGH), aspartate 54, phenylalanine 80, aspartate 101, and glutamine 108.

Belongs to the methyltransferase superfamily. RsmH family.

The protein resides in the cytoplasm. The enzyme catalyses cytidine(1402) in 16S rRNA + S-adenosyl-L-methionine = N(4)-methylcytidine(1402) in 16S rRNA + S-adenosyl-L-homocysteine + H(+). Specifically methylates the N4 position of cytidine in position 1402 (C1402) of 16S rRNA. This chain is Ribosomal RNA small subunit methyltransferase H, found in Ureaplasma urealyticum serovar 10 (strain ATCC 33699 / Western).